Consider the following 1191-residue polypeptide: Roquin-2 (1191 aa).

Cys14, Cys17, Cys33, His35, Cys38, Cys50, and Asp53 together coordinate Zn(2+). An RING-type; degenerate zinc finger spans residues 14–54 (CPICYNEFDENVHKPISLGCSHTVCKTCLNKLHRKACPFDQ). The tract at residues 91–170 (ENKHYEVAKK…RTVTELILQH (80 aa)) is HEPN-N. An ROQ region spans residues 171–325 (QNPQQLSANL…SIIDKLQSPE (155 aa)). The interval 326-396 (SFAKSVQELT…GLVDFIQNYS (71 aa)) is HEPN-C. The C3H1-type zinc-finger motif lies at 410 to 438 (KYKTSMCRDLRQQGGCPRGTNCTFAHSQE). Disordered stretches follow at residues 528 to 576 (GANG…NSVP) and 644 to 680 (ESSLPPASMPYADHYSTFSPRDRMNSSPYQPPPPQPY). Positions 530-546 (NGQNAAGPSADSVTENK) are enriched in polar residues. A Phosphoserine modification is found at Ser549. Over residues 554–576 (PVSNVAATSAGPSNVGTELNSVP) the composition is skewed to polar residues. Residues Ser808, Ser983, and Ser1119 each carry the phosphoserine modification.

Interacts with EDC4. Interacts with CCR4-NOT deadenylase complex. Interacts with MAP3K5; the interaction is probably stimulus-dependent. Post-translationally, proteolytically cleaved after Arg-509 and Arg-585 by MALT1 in activated CD4(+) T cells; cleavage at Arg-509 and Arg-585 is critical for promoting RC3H1 degradation in response to T-cell receptor (TCR) stimulation, and hence is necessary for prolonging the stability of a set of mRNAs controlling Th17 cell differentiation. In terms of tissue distribution, expressed in spleen, testis, ovary and small intestine.

It is found in the cytoplasm. Its subcellular location is the P-body. The enzyme catalyses S-ubiquitinyl-[E2 ubiquitin-conjugating enzyme]-L-cysteine + [acceptor protein]-L-lysine = [E2 ubiquitin-conjugating enzyme]-L-cysteine + N(6)-ubiquitinyl-[acceptor protein]-L-lysine.. It participates in protein modification; protein ubiquitination. Its activity is regulated as follows. Binding to dsRNA, but not CDE RNA, crosstalks with the E3 ubiquitin ligase activity and may inhibit ubiquitination. Its function is as follows. Post-transcriptional repressor of mRNAs containing a conserved stem loop motif, called constitutive decay element (CDE), which is often located in the 3'-UTR, as in HMGXB3, ICOS, IER3, NFKBID, NFKBIZ, PPP1R10, TNF and in many more mRNAs. Binds to CDE and promotes mRNA deadenylation and degradation. This process does not involve miRNAs. In follicular helper T (Tfh) cells, represses of ICOS and TNFRSF4 expression, thus preventing spontaneous Tfh cell differentiation, germinal center B-cell differentiation in the absence of immunization and autoimmunity. In resting or LPS-stimulated macrophages, controls inflammation by suppressing TNF expression. Also recognizes CDE in its own mRNA and in that of paralogous RC3H1, possibly leading to feedback loop regulation. miRNA-binding protein that regulates microRNA homeostasis. Enhances DICER-mediated processing of pre-MIR146a but reduces mature MIR146a levels through an increase of 3' end uridylation. Both inhibits ICOS mRNA expression and they may act together to exert the suppression. Acts as a ubiquitin E3 ligase. Pairs with E2 enzymes UBE2B, UBE2D2, UBE2E2, UBE2E3, UBE2G2, UBE2K and UBE2Q2 and produces polyubiquitin chains. Shows the strongest activity when paired with UBE2N:UBE2V1 or UBE2N:UBE2V2 E2 complexes and generate both short and long polyubiquitin chains. Involved in the ubiquitination of MAP3K5. Able to interact with double-stranded RNA (dsRNA). The sequence is that of Roquin-2 (RC3H2) from Homo sapiens (Human).